We begin with the raw amino-acid sequence, 473 residues long: Cysteine--tRNA ligase (473 aa).

A Zn(2+)-binding site is contributed by cysteine 27. Positions 29–39 (ITPYDHMHVGH) match the 'HIGH' region motif. Residues cysteine 213, histidine 238, and glutamate 242 each coordinate Zn(2+). The 'KMSKS' region signature appears at 271 to 275 (KMSKS). Lysine 274 contacts ATP.

It belongs to the class-I aminoacyl-tRNA synthetase family. Requires Zn(2+) as cofactor.

It localises to the cytoplasm. It catalyses the reaction tRNA(Cys) + L-cysteine + ATP = L-cysteinyl-tRNA(Cys) + AMP + diphosphate. This is Cysteine--tRNA ligase from Pyrobaculum islandicum (strain DSM 4184 / JCM 9189 / GEO3).